The chain runs to 36 residues: Serum amyloid P-component (36 aa).

Residues 6–36 (SGKVFVIPMATSTSHVKLHARVSEPISAMTM) form the Pentraxin (PTX) domain.

It belongs to the pentraxin family. In terms of assembly, homopentamer. Discoid arrangement of 5 covalently bound subunits. It depends on Ca(2+) as a cofactor.

The protein localises to the secreted. In Salmo salar (Atlantic salmon), this protein is Serum amyloid P-component.